The primary structure comprises 578 residues: Vi polysaccharide biosynthesis protein VipC/TviE (578 aa).

The protein operates within glycan metabolism; Vi-antigen biosynthesis. Its pathway is capsule biogenesis; capsule polysaccharide biosynthesis. This chain is Vi polysaccharide biosynthesis protein VipC/TviE (vipC), found in Salmonella typhi.